Here is a 999-residue protein sequence, read N- to C-terminus: Hypoxia up-regulated protein 1 (999 aa).

A signal peptide spans 1-32 (MADKVRRQRPRRRVCWALVAVLLADLLALSDT). Asparagine 155, asparagine 222, and asparagine 515 each carry an N-linked (GlcNAc...) asparagine glycan. Serine 567 is subject to Phosphoserine. Residues 578-694 (GNTISSLFGG…KKQKPARKRR (117 aa)) form a disordered region. An N-linked (GlcNAc...) asparagine glycan is attached at asparagine 596. Composition is skewed to basic and acidic residues over residues 611–626 (GSKD…KEEA) and 641–672 (PKGD…KAEA). 3 N-linked (GlcNAc...) asparagine glycosylation sites follow: asparagine 830, asparagine 862, and asparagine 869. An N6-acetyllysine modification is found at lysine 883. The interval 909–999 (AKFTKPRPRP…QKRPLKNDEL (91 aa)) is disordered. Asparagine 922 and asparagine 931 each carry an N-linked (GlcNAc...) asparagine glycan. The short motif at 996–999 (NDEL) is the Prevents secretion from ER element.

Belongs to the heat shock protein 70 family. Part of a large chaperone multiprotein complex comprising DNAJB11, HSP90B1, HSPA5, HYOU, PDIA2, PDIA4, PDIA6, PPIB, SDF2L1, UGGT1 and very small amounts of ERP29, but not, or at very low levels, CALR nor CANX. As to expression, highly expressed in tissues that contain well-developed endoplasmic reticulum and synthesize large amounts of secretory proteins. Highly expressed in liver and pancreas and lower expression in brain and kidney. Also expressed in macrophages within aortic atherosclerotic plaques, and in breast cancers.

Its subcellular location is the endoplasmic reticulum lumen. Has a pivotal role in cytoprotective cellular mechanisms triggered by oxygen deprivation. Promotes HSPA5/BiP-mediated ATP nucleotide exchange and thereby activates the unfolded protein response (UPR) pathway in the presence of endoplasmic reticulum stress. May play a role as a molecular chaperone and participate in protein folding. The protein is Hypoxia up-regulated protein 1 (HYOU1) of Homo sapiens (Human).